We begin with the raw amino-acid sequence, 368 residues long: Aspartate-semialdehyde dehydrogenase (368 aa).

Residues 10 to 13, 37 to 38, and glutamine 74 each bind NADP(+); these read RGMV and TS. Arginine 103 serves as a coordination point for phosphate. Catalysis depends on cysteine 136, which acts as the Acyl-thioester intermediate. Cysteine 136 carries the S-cysteinyl cysteine; in inhibited form modification. Residue glutamine 163 coordinates substrate. Residues 166–167 and proline 194 each bind NADP(+); that span reads SG. Substrate is bound at residue glutamate 242. Lysine 245 provides a ligand contact to phosphate. Arginine 268 is a substrate binding site. Residue histidine 275 is the Proton acceptor of the active site. Glutamine 351 is an NADP(+) binding site.

It belongs to the aspartate-semialdehyde dehydrogenase family. As to quaternary structure, homodimer.

The catalysed reaction is L-aspartate 4-semialdehyde + phosphate + NADP(+) = 4-phospho-L-aspartate + NADPH + H(+). It functions in the pathway amino-acid biosynthesis; L-lysine biosynthesis via DAP pathway; (S)-tetrahydrodipicolinate from L-aspartate: step 2/4. The protein operates within amino-acid biosynthesis; L-methionine biosynthesis via de novo pathway; L-homoserine from L-aspartate: step 2/3. Its pathway is amino-acid biosynthesis; L-threonine biosynthesis; L-threonine from L-aspartate: step 2/5. Functionally, catalyzes the NADPH-dependent formation of L-aspartate-semialdehyde (L-ASA) by the reductive dephosphorylation of L-aspartyl-4-phosphate. The chain is Aspartate-semialdehyde dehydrogenase from Salmonella typhi.